A 329-amino-acid polypeptide reads, in one-letter code: tRNA (guanine(10)-N2)-dimethyltransferase (329 aa).

One can recognise a THUMP domain in the interval 40–143; that stretch reads NVENVEIFER…KLWIGIRIRE (104 aa).

Belongs to the methyltransferase superfamily. Trm-G10 family. As to quaternary structure, monomer.

It localises to the cytoplasm. The catalysed reaction is guanosine(10) in tRNA + 2 S-adenosyl-L-methionine = N(2)-dimethylguanosine(10) in tRNA + 2 S-adenosyl-L-homocysteine + 2 H(+). Functionally, catalyzes the adenosylmethionine-dependent methylation of the exocyclic amino group (N(2)) of guanosine at position 10 of various tRNAs. Acts via a two-step process that leads to the formation of either N(2)-monomethyl (m(2)G) or N(2)-dimethylguanosine (m(2)(2)G). This chain is tRNA (guanine(10)-N2)-dimethyltransferase (trmG10), found in Pyrococcus abyssi (strain GE5 / Orsay).